The primary structure comprises 277 residues: Short chain dehydrogenase penD (277 aa).

Residues I28, D76, and N105 each coordinate NADP(+). Catalysis depends on proton donor residues S158 and S159. The NADP(+) site is built by Y173, K177, and T209. The Proton acceptor role is filled by Y173. K177 acts as the Lowers pKa of active site Tyr in catalysis.

Belongs to the short-chain dehydrogenases/reductases (SDR) family.

The enzyme catalyses yaequinolone D + NADPH + H(+) = penigequinolone A + NADP(+) + H2O. It carries out the reaction yaequinolone D + NADPH + H(+) = penigequinolone B + NADP(+) + H2O. Its pathway is secondary metabolite biosynthesis. It functions in the pathway alkaloid biosynthesis. The protein operates within mycotoxin biosynthesis. In terms of biological role, short chain dehydrogenase; part of the gene cluster that mediates the biosynthesis of penigequinolones, potent insecticidal alkaloids that contain a highly modified 10-carbon prenyl group. The first stage is catalyzed by the nonribosomal peptide synthetase penN that condenses anthranilic acid and O-methyl-L-tyrosine to produce 4'-methoxycyclopeptin. 4'-methoxycyclopeptin is then converted to 4'-methoxydehydrocyclopeptin by the ketoglutarate-dependent dioxygenase penM through dehydrogenation to form a double bond between C-alpha and C-beta of the O-methyltyrosine side chain. PenM also converts its first product methoxydehydrocyclopeptin to 4'-methoxycyclopenin. The following conversion of 4'methoxycyclopenin into 4'-methoxyviridicatin is catalyzed by the cyclopenase penL. 4'-methoxyviridicatin is the precursor of quinolone natural products, and is further converted to quinolinone B. The prenyltransferase penI then catalyzes the canonical Friedel-Crafts alkylation of quinolinone B with dimethylallyl cation to yield dimethylallyl quinolone, which is subjected to FAD-dependent dehydrogenation by the FAD-linked oxidoreductase penH to yield conjugated aryl diene. The delta(3') double bond then serves as the site of the second alkylation with DMAPP catalyzed by the prenyltransferase penG to yield a carbenium ion intermediate, which can be attacked by H(2)O to yield a styrenyl quinolone containing a C3'-hydroxyprenyl chain, or undergo cyclization to yield yaequinolones J1 and J2. The conversion of the styrenyl quinolone into the tetrahydrofuran-containing yaequinolone C is performed by the FAD-dependent monooxygenase penE and involves epoxidation of the terminal C7'-C8' olefin, followed by epoxide ring opening initiated by the C3' hydroxyl group. The predicted cysteine hydrolase penJ acts as an epoxide hydrolase that enhances the rate of the 5-exo-tet cyclization step, increasing the yield of yaequinolone C. PenF catalyzes the cationic rearrangement of the epoxide formed by penE (before ring opening to produce yaequinolone C) into yaequinolone D. Finally, the short-chain dehydrogenase/reductase (SDR)-like reductase penD, catalyzes both the dehydration of yaequinolone D and the reduction of the resulting oxonium to yield penigequinolone. This is Short chain dehydrogenase penD from Penicillium thymicola.